A 49-amino-acid polypeptide reads, in one-letter code: Large ribosomal subunit protein bL33 (49 aa).

Belongs to the bacterial ribosomal protein bL33 family.

This chain is Large ribosomal subunit protein bL33, found in Clostridium beijerinckii (strain ATCC 51743 / NCIMB 8052) (Clostridium acetobutylicum).